The sequence spans 406 residues: UPF0754 membrane protein Cyan7425_4067 (406 aa).

A helical transmembrane segment spans residues 381–401; it reads IVTLGGVLGLLIGIAQSVLLL.

The protein belongs to the UPF0754 family.

The protein resides in the cell inner membrane. This is UPF0754 membrane protein Cyan7425_4067 from Cyanothece sp. (strain PCC 7425 / ATCC 29141).